The following is a 322-amino-acid chain: TATA box-binding protein-associated factor RNA polymerase I subunit D (322 aa).

2 disordered regions span residues 1 to 70 (MAQS…SIEP) and 82 to 116 (FKKK…RITR). Serine 23 is modified (phosphoserine). A compositionally biased stretch (basic residues) spans 82 to 107 (FKKKKRKKRKKRKYEPKLRPRGRPRG). Phosphoserine is present on serine 137. Residues 198–219 (YMDDDGSLSPIEEPLTEDEATN) are disordered. Serine 232 bears the Phosphoserine mark. The span at 257–267 (FSKKAKDATHR) shows a compositional bias: basic and acidic residues. The tract at residues 257 to 276 (FSKKAKDATHREKGHRRTLK) is disordered.

As to quaternary structure, component of the transcription factor SL1/TIF-IB complex, composed of TBP and at least TAF1A, TAF1B, TAF1C and TAF1D. Interacts with UBTF.

It is found in the nucleus. Its function is as follows. Component of the transcription factor SL1/TIF-IB complex, which is involved in the assembly of the PIC (preinitiation complex) during RNA polymerase I-dependent transcription. The rate of PIC formation probably is primarily dependent on the rate of association of SL1/TIF-IB with the rDNA promoter. SL1/TIF-IB is involved in stabilization of nucleolar transcription factor 1/UBTF on rDNA. Formation of SL1/TIF-IB excludes the association of TBP with TFIID subunits. The chain is TATA box-binding protein-associated factor RNA polymerase I subunit D (Taf1d) from Mus musculus (Mouse).